Here is a 172-residue protein sequence, read N- to C-terminus: Lipopolysaccharide export system protein LptA (172 aa).

A signal peptide spans 1–23 (MKLVSNKILFLATMVLASSSAFA).

It belongs to the LptA family. In terms of assembly, component of the lipopolysaccharide transport and assembly complex.

Its subcellular location is the periplasm. In terms of biological role, involved in the assembly of lipopolysaccharide (LPS). Required for the translocation of LPS from the inner membrane to the outer membrane. May form a bridge between the inner membrane and the outer membrane, via interactions with LptC and LptD, thereby facilitating LPS transfer across the periplasm. This Haemophilus influenzae (strain ATCC 51907 / DSM 11121 / KW20 / Rd) protein is Lipopolysaccharide export system protein LptA.